A 77-amino-acid chain; its full sequence is U14-theraphotoxin-Cg1a 2 (77 aa).

The first 21 residues, 1–21 (MKTSVLLVILGIAAITVQCTA), serve as a signal peptide directing secretion. A propeptide spanning residues 22–49 (SESVKQDSLRTFVDAVLGWNAEMASEAR) is cleaved from the precursor. 3 disulfides stabilise this stretch: Cys50–Cys64, Cys57–Cys69, and Cys63–Cys75. Lys77 is subject to Lysine amide.

The protein belongs to the neurotoxin 10 (Hwtx-1) family. 65 (Jztx-21) subfamily. Expressed by the venom gland.

Its subcellular location is the secreted. Functionally, probable ion channel inhibitor. In Chilobrachys guangxiensis (Chinese earth tiger tarantula), this protein is U14-theraphotoxin-Cg1a 2.